The sequence spans 374 residues: Phosphatidylglycerol--prolipoprotein diacylglyceryl transferase (374 aa).

The next 4 helical transmembrane spans lie at 33-53, 155-175, 195-215, and 222-242; these read ICFI…IALF, LCWF…VFFY, LASH…TSYI, and LSFL…AVFI. Residue arginine 243 coordinates a 1,2-diacyl-sn-glycero-3-phospho-(1'-sn-glycerol). A run of 3 helical transmembrane segments spans residues 279–299, 306–326, and 341–361; these read PVQL…FTLW, LAAG…RFLL, and ILQM…CLVW.

It belongs to the Lgt family.

It is found in the cell inner membrane. The enzyme catalyses L-cysteinyl-[prolipoprotein] + a 1,2-diacyl-sn-glycero-3-phospho-(1'-sn-glycerol) = an S-1,2-diacyl-sn-glyceryl-L-cysteinyl-[prolipoprotein] + sn-glycerol 1-phosphate + H(+). It functions in the pathway protein modification; lipoprotein biosynthesis (diacylglyceryl transfer). In terms of biological role, catalyzes the transfer of the diacylglyceryl group from phosphatidylglycerol to the sulfhydryl group of the N-terminal cysteine of a prolipoprotein, the first step in the formation of mature lipoproteins. In Protochlamydia amoebophila (strain UWE25), this protein is Phosphatidylglycerol--prolipoprotein diacylglyceryl transferase.